The chain runs to 271 residues: Hydroxyethylthiazole kinase (271 aa).

Residue methionine 45 participates in substrate binding. Residues arginine 121 and threonine 168 each coordinate ATP. Substrate is bound at residue glycine 195.

It belongs to the Thz kinase family. It depends on Mg(2+) as a cofactor.

It carries out the reaction 5-(2-hydroxyethyl)-4-methylthiazole + ATP = 4-methyl-5-(2-phosphooxyethyl)-thiazole + ADP + H(+). The protein operates within cofactor biosynthesis; thiamine diphosphate biosynthesis; 4-methyl-5-(2-phosphoethyl)-thiazole from 5-(2-hydroxyethyl)-4-methylthiazole: step 1/1. Catalyzes the phosphorylation of the hydroxyl group of 4-methyl-5-beta-hydroxyethylthiazole (THZ). The chain is Hydroxyethylthiazole kinase from Bacillus pumilus (strain SAFR-032).